The primary structure comprises 193 residues: MQLFDLWTDLLDLLTIVAGPTAVGKGTVISHLRKCHPQVKVSISATTREPRDSERDGIDYYFVTDEVFDCMVRSGQMLEWATVHGLHKYGTPKEEVERLLHTGQPVILEIDLQGMRKVRKILPAVRTVILLPPAWDDLICRIKRRGSESQDEIDARLATAKKELEAIGEFDYKIVNADVEIAANELWLAMNRV.

Positions 12–191 (DLLTIVAGPT…AANELWLAMN (180 aa)) constitute a Guanylate kinase-like domain. 19 to 26 (GPTAVGKG) serves as a coordination point for ATP.

It belongs to the guanylate kinase family.

Its subcellular location is the cytoplasm. It carries out the reaction GMP + ATP = GDP + ADP. Its function is as follows. Essential for recycling GMP and indirectly, cGMP. The protein is Guanylate kinase of Tropheryma whipplei (strain TW08/27) (Whipple's bacillus).